The following is a 295-amino-acid chain: Bifunctional protein FolD (295 aa).

Residues 165–167 (GRG), Ser-192, and Ile-233 each bind NADP(+).

This sequence belongs to the tetrahydrofolate dehydrogenase/cyclohydrolase family. As to quaternary structure, homodimer.

The enzyme catalyses (6R)-5,10-methylene-5,6,7,8-tetrahydrofolate + NADP(+) = (6R)-5,10-methenyltetrahydrofolate + NADPH. It catalyses the reaction (6R)-5,10-methenyltetrahydrofolate + H2O = (6R)-10-formyltetrahydrofolate + H(+). It functions in the pathway one-carbon metabolism; tetrahydrofolate interconversion. Functionally, catalyzes the oxidation of 5,10-methylenetetrahydrofolate to 5,10-methenyltetrahydrofolate and then the hydrolysis of 5,10-methenyltetrahydrofolate to 10-formyltetrahydrofolate. This is Bifunctional protein FolD from Tropheryma whipplei (strain Twist) (Whipple's bacillus).